Consider the following 275-residue polypeptide: 4-hydroxy-3-methylbut-2-enyl diphosphate reductase (275 aa).

Cys-12 contacts [4Fe-4S] cluster. Positions 40 and 70 each coordinate (2E)-4-hydroxy-3-methylbut-2-enyl diphosphate. Residues His-40 and His-70 each contribute to the dimethylallyl diphosphate site. His-40 and His-70 together coordinate isopentenyl diphosphate. A [4Fe-4S] cluster-binding site is contributed by Cys-92. His-119 provides a ligand contact to (2E)-4-hydroxy-3-methylbut-2-enyl diphosphate. Residue His-119 participates in dimethylallyl diphosphate binding. His-119 is an isopentenyl diphosphate binding site. Glu-121 (proton donor) is an active-site residue. Thr-151 serves as a coordination point for (2E)-4-hydroxy-3-methylbut-2-enyl diphosphate. Cys-181 contributes to the [4Fe-4S] cluster binding site. Residues Ser-209, Ser-210, Asn-211, and Ser-251 each coordinate (2E)-4-hydroxy-3-methylbut-2-enyl diphosphate. 4 residues coordinate dimethylallyl diphosphate: Ser-209, Ser-210, Asn-211, and Ser-251. Residues Ser-209, Ser-210, Asn-211, and Ser-251 each coordinate isopentenyl diphosphate.

This sequence belongs to the IspH family. It depends on [4Fe-4S] cluster as a cofactor.

It catalyses the reaction isopentenyl diphosphate + 2 oxidized [2Fe-2S]-[ferredoxin] + H2O = (2E)-4-hydroxy-3-methylbut-2-enyl diphosphate + 2 reduced [2Fe-2S]-[ferredoxin] + 2 H(+). The enzyme catalyses dimethylallyl diphosphate + 2 oxidized [2Fe-2S]-[ferredoxin] + H2O = (2E)-4-hydroxy-3-methylbut-2-enyl diphosphate + 2 reduced [2Fe-2S]-[ferredoxin] + 2 H(+). It functions in the pathway isoprenoid biosynthesis; dimethylallyl diphosphate biosynthesis; dimethylallyl diphosphate from (2E)-4-hydroxy-3-methylbutenyl diphosphate: step 1/1. It participates in isoprenoid biosynthesis; isopentenyl diphosphate biosynthesis via DXP pathway; isopentenyl diphosphate from 1-deoxy-D-xylulose 5-phosphate: step 6/6. In terms of biological role, catalyzes the conversion of 1-hydroxy-2-methyl-2-(E)-butenyl 4-diphosphate (HMBPP) into a mixture of isopentenyl diphosphate (IPP) and dimethylallyl diphosphate (DMAPP). Acts in the terminal step of the DOXP/MEP pathway for isoprenoid precursor biosynthesis. The chain is 4-hydroxy-3-methylbut-2-enyl diphosphate reductase from Thermotoga sp. (strain RQ2).